The sequence spans 362 residues: UDP-N-acetylglucosamine--N-acetylmuramyl-(pentapeptide) pyrophosphoryl-undecaprenol N-acetylglucosamine transferase (362 aa).

UDP-N-acetyl-alpha-D-glucosamine contacts are provided by residues 10–12, N124, S194, I249, and Q294; that span reads TGG.

This sequence belongs to the glycosyltransferase 28 family. MurG subfamily.

The protein resides in the cell membrane. It carries out the reaction Mur2Ac(oyl-L-Ala-gamma-D-Glu-L-Lys-D-Ala-D-Ala)-di-trans,octa-cis-undecaprenyl diphosphate + UDP-N-acetyl-alpha-D-glucosamine = beta-D-GlcNAc-(1-&gt;4)-Mur2Ac(oyl-L-Ala-gamma-D-Glu-L-Lys-D-Ala-D-Ala)-di-trans,octa-cis-undecaprenyl diphosphate + UDP + H(+). It participates in cell wall biogenesis; peptidoglycan biosynthesis. In terms of biological role, cell wall formation. Catalyzes the transfer of a GlcNAc subunit on undecaprenyl-pyrophosphoryl-MurNAc-pentapeptide (lipid intermediate I) to form undecaprenyl-pyrophosphoryl-MurNAc-(pentapeptide)GlcNAc (lipid intermediate II). This is UDP-N-acetylglucosamine--N-acetylmuramyl-(pentapeptide) pyrophosphoryl-undecaprenol N-acetylglucosamine transferase from Pediococcus pentosaceus (strain ATCC 25745 / CCUG 21536 / LMG 10740 / 183-1w).